Reading from the N-terminus, the 838-residue chain is Pentatricopeptide repeat-containing protein At4g19440, chloroplastic (838 aa).

Residues 1–32 (MAALLYFPKISSQMTSSHFISFSPMDLRRLSR) constitute a chloroplast transit peptide. 16 PPR repeats span residues 238-268 (SKTTCNILLTSLVRANEFQKCCEAFDVVCKG), 272-306 (DVYLFTTAINAFCKGGKVEEAVKLFSKMEEAGVAP), 307-341 (NVVTFNTVIDGLGMCGRYDEAFMFKEKMVERGMEP), 342-376 (TLITYSILVKGLTRAKRIGDAYFVLKEMTKKGFPP), 377-411 (NVIVYNNLIDSFIEAGSLNKAIEIKDLMVSKGLSL), 412-446 (TSSTYNTLIKGYCKNGQADNAERLLKEMLSIGFNV), 447-481 (NQGSFTSVICLLCSHLMFDSALRFVGEMLLRNMSP), 482-516 (GGGLLTTLISGLCKHGKHSKALELWFQFLNKGFVV), 517-551 (DTRTSNALLHGLCEAGKLDEAFRIQKEILGRGCVM), 552-586 (DRVSYNTLISGCCGKKKLDEAFMFLDEMVKRGLKP), 587-621 (DNYTYSILICGLFNMNKVEEAIQFWDDCKRNGMLP), 622-656 (DVYTYSVMIDGCCKAERTEEGQEFFDEMMSKNVQP), 657-691 (NTVVYNHLIRAYCRSGRLSMALELREDMKHKGISP), 692-726 (NSATYTSLIKGMSIISRVEEAKLLFEEMRMEGLEP), 727-761 (NVFHYTALIDGYGKLGQMVKVECLLREMHSKNVHP), and 762-796 (NKITYTVMIGGYARDGNVTEASRLLNEMREKGIVP).

It belongs to the PPR family. P subfamily.

The protein localises to the plastid. It is found in the chloroplast. The polypeptide is Pentatricopeptide repeat-containing protein At4g19440, chloroplastic (Arabidopsis thaliana (Mouse-ear cress)).